Reading from the N-terminus, the 352-residue chain is Photosystem II D2 protein (352 aa).

The helical transmembrane segment at 40 to 60 (CAYLALGGWLTGTTFVTSWYT) threads the bilayer. Histidine 117 provides a ligand contact to chlorophyll a. Residues 124 to 140 (GFMLRQFEIAQSVRLRP) traverse the membrane as a helical segment. Residues glutamine 129 and asparagine 142 each contribute to the pheophytin a site. The chain crosses the membrane as a helical span at residues 152-165 (VFVSVFLIYPLGQS). Position 197 (histidine 197) interacts with chlorophyll a. The chain crosses the membrane as a helical span at residues 207 to 227 (AALLCAIHGATVENTLFEDGD). Positions 214 and 261 each coordinate a plastoquinone. Histidine 214 is a binding site for Fe cation. A Fe cation-binding site is contributed by histidine 268. The chain crosses the membrane as a helical span at residues 278–294 (GLWMSALGVVGLALNLR).

It belongs to the reaction center PufL/M/PsbA/D family. PSII is composed of 1 copy each of membrane proteins PsbA, PsbB, PsbC, PsbD, PsbE, PsbF, PsbH, PsbI, PsbJ, PsbK, PsbL, PsbM, PsbT, PsbY, PsbZ, Psb30/Ycf12, at least 3 peripheral proteins of the oxygen-evolving complex and a large number of cofactors. It forms dimeric complexes. The D1/D2 heterodimer binds P680, chlorophylls that are the primary electron donor of PSII, and subsequent electron acceptors. It shares a non-heme iron and each subunit binds pheophytin, quinone, additional chlorophylls, carotenoids and lipids. There is also a Cl(-1) ion associated with D1 and D2, which is required for oxygen evolution. The PSII complex binds additional chlorophylls, carotenoids and specific lipids. is required as a cofactor.

It is found in the plastid. The protein localises to the chloroplast thylakoid membrane. It carries out the reaction 2 a plastoquinone + 4 hnu + 2 H2O = 2 a plastoquinol + O2. Photosystem II (PSII) is a light-driven water:plastoquinone oxidoreductase that uses light energy to abstract electrons from H(2)O, generating O(2) and a proton gradient subsequently used for ATP formation. It consists of a core antenna complex that captures photons, and an electron transfer chain that converts photonic excitation into a charge separation. The D1/D2 (PsbA/PsbD) reaction center heterodimer binds P680, the primary electron donor of PSII as well as several subsequent electron acceptors. D2 is needed for assembly of a stable PSII complex. The sequence is that of Photosystem II D2 protein from Bigelowiella natans (Pedinomonas minutissima).